We begin with the raw amino-acid sequence, 148 residues long: UPF0260 protein PM0539 (148 aa).

The protein belongs to the UPF0260 family.

The polypeptide is UPF0260 protein PM0539 (Pasteurella multocida (strain Pm70)).